A 101-amino-acid chain; its full sequence is uncharacterized protein (101 aa).

This is an uncharacterized protein from Mycoplasma pneumoniae (strain ATCC 29342 / M129 / Subtype 1) (Mycoplasmoides pneumoniae).